The sequence spans 738 residues: DNA topoisomerase 4 subunit A (738 aa).

The 465-residue stretch at 32–496 folds into the Topo IIA-type catalytic domain; it reads LPDVRDGLKP…SFEEVTLTNQ (465 aa). Y120 serves as the catalytic O-(5'-phospho-DNA)-tyrosine intermediate.

Belongs to the type II topoisomerase GyrA/ParC subunit family. ParC type 1 subfamily. Heterotetramer composed of ParC and ParE.

It localises to the cell membrane. The enzyme catalyses ATP-dependent breakage, passage and rejoining of double-stranded DNA.. In terms of biological role, topoisomerase IV is essential for chromosome segregation. It relaxes supercoiled DNA. Performs the decatenation events required during the replication of a circular DNA molecule. This Rickettsia conorii (strain ATCC VR-613 / Malish 7) protein is DNA topoisomerase 4 subunit A.